The chain runs to 191 residues: Zinc finger protein GIS2 (191 aa).

A C2H2-type zinc finger spans residues phenylalanine 55 to histidine 77.

Expressed in inflorescence meristems, floral meristems and stem epidermis.

It is found in the nucleus. Its function is as follows. Probable transcription factor required for the initiation of inflorescence trichomes in response to gibberellin and cytokinin. Is not involved in the regulation of trichome branching. Is functionally equivalent to ZFP8. In Arabidopsis thaliana (Mouse-ear cress), this protein is Zinc finger protein GIS2 (GIS2).